Reading from the N-terminus, the 446-residue chain is Mannan endo-1,6-alpha-mannosidase DCW1 (446 aa).

A signal peptide spans Met1 to Gly18. N-linked (GlcNAc...) asparagine glycosylation is found at Asn31, Asn81, Asn106, Asn200, Asn222, Asn237, Asn262, Asn278, Asn285, Asn334, Asn391, and Asn397. Residues Pro389–Pro408 form a disordered region. Ser422 carries GPI-anchor amidated serine lipidation. Residues Arg423 to Tyr446 constitute a propeptide, removed in mature form.

It belongs to the glycosyl hydrolase 76 family.

It is found in the secreted. The protein resides in the cell wall. The protein localises to the cell membrane. It catalyses the reaction Random hydrolysis of (1-&gt;6)-alpha-D-mannosidic linkages in unbranched (1-&gt;6)-mannans.. Required for normal synthesis of the cell wall. This chain is Mannan endo-1,6-alpha-mannosidase DCW1 (DCW1), found in Candida glabrata (strain ATCC 2001 / BCRC 20586 / JCM 3761 / NBRC 0622 / NRRL Y-65 / CBS 138) (Yeast).